The sequence spans 688 residues: Lectin-domain containing receptor kinase VI.3 (688 aa).

The N-terminal stretch at 1 to 14 (MLVLFLLLTIPTRA) is a signal peptide. At 15–306 (QRTTTETPKT…KRGYNSQVLA (292 aa)) the chain is on the extracellular side. The interval 22 to 271 (PKTEFIFRGF…AHYVMGWSFS (250 aa)) is legume-lectin like. A helical transmembrane segment spans residues 307–327 (LIVALSGVTVILLALLFFFVM). Residues 328–688 (YKKRLQQGEV…VSSSSVISGR (361 aa)) are Cytoplasmic-facing. A Protein kinase domain is found at 361-640 (FKENRIVGTG…LNGDDDVPEI (280 aa)). Residues 367-375 (VGTGGFGTV) and lysine 391 each bind ATP. The active-site Proton acceptor is the aspartate 490. The disordered stretch occupies residues 662–688 (VSSDRASSSVPSFSVTRVSSSSVISGR).

In the C-terminal section; belongs to the protein kinase superfamily. Ser/Thr protein kinase family. This sequence in the N-terminal section; belongs to the leguminous lectin family.

It localises to the cell membrane. The catalysed reaction is L-seryl-[protein] + ATP = O-phospho-L-seryl-[protein] + ADP + H(+). It catalyses the reaction L-threonyl-[protein] + ATP = O-phospho-L-threonyl-[protein] + ADP + H(+). Its function is as follows. Involved in negative regulation of abscisic acid response in seed germination. In Arabidopsis thaliana (Mouse-ear cress), this protein is Lectin-domain containing receptor kinase VI.3 (LECRK63).